A 63-amino-acid chain; its full sequence is Beta-defensin 4 (63 aa).

The first 22 residues, 1-22, serve as a signal peptide directing secretion; it reads MRIHYLLFSFLLVLLSPLSAFT. At glutamine 23 the chain carries Pyrrolidone carboxylic acid. 3 cysteine pairs are disulfide-bonded: cysteine 31–cysteine 59, cysteine 38–cysteine 52, and cysteine 42–cysteine 60.

The protein belongs to the beta-defensin family. Highly expressed in lung.

Its subcellular location is the secreted. Exhibits antimicrobial activity against Gram-negative bacteria and Gram-positive bacteria. May act as a ligand for C-C chemokine receptor CCR6. Binds to CCR6 and induces chemotactic activity of CCR6-expressing cells. The protein is Beta-defensin 4 (Defb4) of Rattus norvegicus (Rat).